The sequence spans 414 residues: Serine hydroxymethyltransferase (414 aa).

(6S)-5,6,7,8-tetrahydrofolate-binding positions include L116 and 120 to 122 (GHL). K224 carries the post-translational modification N6-(pyridoxal phosphate)lysine. (6S)-5,6,7,8-tetrahydrofolate contacts are provided by residues E240 and 348–350 (SPF).

The protein belongs to the SHMT family. As to quaternary structure, homodimer. Requires pyridoxal 5'-phosphate as cofactor.

It is found in the cytoplasm. It carries out the reaction (6R)-5,10-methylene-5,6,7,8-tetrahydrofolate + glycine + H2O = (6S)-5,6,7,8-tetrahydrofolate + L-serine. The protein operates within one-carbon metabolism; tetrahydrofolate interconversion. It participates in amino-acid biosynthesis; glycine biosynthesis; glycine from L-serine: step 1/1. Functionally, catalyzes the reversible interconversion of serine and glycine with tetrahydrofolate (THF) serving as the one-carbon carrier. This reaction serves as the major source of one-carbon groups required for the biosynthesis of purines, thymidylate, methionine, and other important biomolecules. Also exhibits THF-independent aldolase activity toward beta-hydroxyamino acids, producing glycine and aldehydes, via a retro-aldol mechanism. This Campylobacter jejuni subsp. jejuni serotype O:2 (strain ATCC 700819 / NCTC 11168) protein is Serine hydroxymethyltransferase.